The sequence spans 266 residues: Acetyl esterase (266 aa).

The sequence is that of Acetyl esterase (xynC) from Caldicellulosiruptor saccharolyticus (Caldocellum saccharolyticum).